We begin with the raw amino-acid sequence, 251 residues long: Small ribosomal subunit protein uS3 (251 aa).

One can recognise a KH type-2 domain in the interval 39–109 (IRNYVQARLK…EVKIDVIEVI (71 aa)). A compositionally biased stretch (basic and acidic residues) spans 222 to 239 (LKKIKDRRGEQRSRGRDS). A disordered region spans residues 222–251 (LKKIKDRRGEQRSRGRDSRNRRRRKPRQTT). Residues 240 to 251 (RNRRRRKPRQTT) show a composition bias toward basic residues.

This sequence belongs to the universal ribosomal protein uS3 family. In terms of assembly, part of the 30S ribosomal subunit. Forms a tight complex with proteins S10 and S14.

In terms of biological role, binds the lower part of the 30S subunit head. Binds mRNA in the 70S ribosome, positioning it for translation. This is Small ribosomal subunit protein uS3 from Prosthecochloris aestuarii (strain DSM 271 / SK 413).